The primary structure comprises 165 residues: Lipoprotein signal peptidase (165 aa).

A run of 3 helical transmembrane segments spans residues 9–29 (PFLW…LAVV), 65–85 (WQKY…LFFL), and 97–119 (TGYA…HGFV). Catalysis depends on residues Asp121 and Asp139. Residues 134–154 (VFNVADIAICIGAGLLAIDAF) form a helical membrane-spanning segment.

The protein belongs to the peptidase A8 family.

The protein localises to the cell inner membrane. It carries out the reaction Release of signal peptides from bacterial membrane prolipoproteins. Hydrolyzes -Xaa-Yaa-Zaa-|-(S,diacylglyceryl)Cys-, in which Xaa is hydrophobic (preferably Leu), and Yaa (Ala or Ser) and Zaa (Gly or Ala) have small, neutral side chains.. Its pathway is protein modification; lipoprotein biosynthesis (signal peptide cleavage). Its function is as follows. This protein specifically catalyzes the removal of signal peptides from prolipoproteins. The chain is Lipoprotein signal peptidase from Histophilus somni (strain 2336) (Haemophilus somnus).